Here is a 409-residue protein sequence, read N- to C-terminus: Putative actin-fragmin kinase DDB_G0268812 (409 aa).

Residues 1 to 45 (MKTFRDFKKKIKNNNNNKNNKNNNINNNNSNNNKNNKNNNNNNSN) form a disordered region. The stretch at 5 to 46 (RDFKKKIKNNNNNKNNKNNNINNNNSNNNKNNKNNNNNNSNN) forms a coiled coil. Residues 13 to 45 (NNNNNKNNKNNNINNNNSNNNKNNKNNNNNNSN) are compositionally biased toward low complexity.

It belongs to the protein kinase superfamily. AFK Ser/Thr protein kinase family.

The sequence is that of Putative actin-fragmin kinase DDB_G0268812 from Dictyostelium discoideum (Social amoeba).